A 350-amino-acid chain; its full sequence is S-adenosylmethionine:tRNA ribosyltransferase-isomerase (350 aa).

This sequence belongs to the QueA family. In terms of assembly, monomer.

The protein localises to the cytoplasm. It carries out the reaction 7-aminomethyl-7-carbaguanosine(34) in tRNA + S-adenosyl-L-methionine = epoxyqueuosine(34) in tRNA + adenine + L-methionine + 2 H(+). It participates in tRNA modification; tRNA-queuosine biosynthesis. In terms of biological role, transfers and isomerizes the ribose moiety from AdoMet to the 7-aminomethyl group of 7-deazaguanine (preQ1-tRNA) to give epoxyqueuosine (oQ-tRNA). In Bacillus mycoides (strain KBAB4) (Bacillus weihenstephanensis), this protein is S-adenosylmethionine:tRNA ribosyltransferase-isomerase.